The chain runs to 274 residues: Energy-coupling factor transporter ATP-binding protein EcfA1 (274 aa).

One can recognise an ABC transporter domain in the interval 9–240 (CSFINVAFSY…EQELQKIRLD (232 aa)). 41 to 48 (GHNGSGKS) contributes to the ATP binding site.

Belongs to the ABC transporter superfamily. Energy-coupling factor EcfA family. As to quaternary structure, forms a stable energy-coupling factor (ECF) transporter complex composed of 2 membrane-embedded substrate-binding proteins (S component), 2 ATP-binding proteins (A component) and 2 transmembrane proteins (T component).

It is found in the cell membrane. In terms of biological role, ATP-binding (A) component of a common energy-coupling factor (ECF) ABC-transporter complex. Unlike classic ABC transporters this ECF transporter provides the energy necessary to transport a number of different substrates. This is Energy-coupling factor transporter ATP-binding protein EcfA1 from Mycoplasma genitalium (strain ATCC 33530 / DSM 19775 / NCTC 10195 / G37) (Mycoplasmoides genitalium).